Consider the following 568-residue polypeptide: Proline--tRNA ligase (568 aa).

It belongs to the class-II aminoacyl-tRNA synthetase family. ProS type 1 subfamily. As to quaternary structure, homodimer.

The protein localises to the cytoplasm. It carries out the reaction tRNA(Pro) + L-proline + ATP = L-prolyl-tRNA(Pro) + AMP + diphosphate. Its function is as follows. Catalyzes the attachment of proline to tRNA(Pro) in a two-step reaction: proline is first activated by ATP to form Pro-AMP and then transferred to the acceptor end of tRNA(Pro). As ProRS can inadvertently accommodate and process non-cognate amino acids such as alanine and cysteine, to avoid such errors it has two additional distinct editing activities against alanine. One activity is designated as 'pretransfer' editing and involves the tRNA(Pro)-independent hydrolysis of activated Ala-AMP. The other activity is designated 'posttransfer' editing and involves deacylation of mischarged Ala-tRNA(Pro). The misacylated Cys-tRNA(Pro) is not edited by ProRS. This is Proline--tRNA ligase from Aliarcobacter butzleri (strain RM4018) (Arcobacter butzleri).